Reading from the N-terminus, the 478-residue chain is Transposase for insertion sequence element IS231D (478 aa).

It belongs to the transposase 11 family.

Its function is as follows. Involved in the transposition of the insertion sequence. This chain is Transposase for insertion sequence element IS231D, found in Bacillus thuringiensis subsp. finitimus.